A 391-amino-acid polypeptide reads, in one-letter code: MSYLSIRDLDLKGKRVFIRVDFNVPLQKNDQGAMEITSDKRIKASLPTIQYALEHGAAVILASHLGRPKGKPNTEMSLKPVAARLEQVLKVPVKMAPDCVGPEVQAMLPAPGEVLLLENLRFHAEEEKNDPAFAAQLAALCEIYVNDAFGSAHRAHASTEGMVKLVKQAAAGLLMEKELKYLGMATTNPPRPCVAILGGAKVSDKIEVIQNLGKVVDRLLIGGAMAYTFLKAQGLPTGKSLVEDDKVELAKSLLAELGERLMLPVDHVVVSEIAAGAPFEVVDTIPEGKIAVDIGPKTVEAFSKVVAGAKTVIWNGPMGIFEKPPFDQGTVAVAKAVAGSGATSIVGGGDSEKAIKAAGVSDKISHVSTGGGASLEFLAGDTLPGVAALDR.

Residues 21–23, R41, 64–67, R121, and R154 each bind substrate; these read DFN and HLGR. ATP-binding positions include K205, E322, and 348–351; that span reads GGDS.

The protein belongs to the phosphoglycerate kinase family. As to quaternary structure, monomer.

The protein localises to the cytoplasm. It carries out the reaction (2R)-3-phosphoglycerate + ATP = (2R)-3-phospho-glyceroyl phosphate + ADP. Its pathway is carbohydrate degradation; glycolysis; pyruvate from D-glyceraldehyde 3-phosphate: step 2/5. The protein is Phosphoglycerate kinase of Solibacter usitatus (strain Ellin6076).